Reading from the N-terminus, the 440-residue chain is Phenylacetate-coenzyme A ligase (440 aa).

The protein belongs to the phenylacetyl-CoA ligase family. In terms of assembly, monomer.

The catalysed reaction is 2-phenylacetate + ATP + CoA = phenylacetyl-CoA + AMP + diphosphate. It functions in the pathway aromatic compound metabolism; phenylacetate degradation. Inhibition of activity is observed in the presence of a 1 mM of the divalent cations zinc, copper, and nickel. Catalyzes the activation of phenylacetic acid (PA) to phenylacetyl-CoA (PA-CoA). Involved in the phenylalanine metabolism. The sequence is that of Phenylacetate-coenzyme A ligase (paaK) from Aromatoleum evansii (Azoarcus evansii).